The chain runs to 745 residues: uncharacterized protein (745 aa).

The region spanning 158 to 256 (NQVCDYIELH…HQTPKQYRGD (99 aa)) is the HTH araC/xylS-type domain. 2 DNA-binding regions (H-T-H motif) span residues 175-196 (SELS…TESL) and 223-246 (ITDI…KHFT).

This is an uncharacterized protein from Staphylococcus aureus (strain COL).